Here is a 364-residue protein sequence, read N- to C-terminus: Spermatogenesis-associated protein 22 (364 aa).

5 stretches are compositionally biased toward polar residues: residues 1-13, 30-48, 73-108, 137-169, and 177-189; these read MKRNLNENSTRST, QPLTSNPCTNDPGISNASD, KTVNTGQIPHSVSNSLRSQDSLSKPIQSNAGSSKSD, LMTNNGINSGPINLGAQQQKQLRVSESTNLPNQ, and QTKSSEIPGSTMR. Disordered regions lie at residues 1–51 and 70–189; these read MKRN…DNYD and PLTK…STMR.

As to quaternary structure, component of a multiprotein complex with MEIOB and RPA2. Interacts with MEIOB. Interacts with the complex BRME1:HSF2BP:BRCA2.

The protein resides in the chromosome. Its function is as follows. Meiosis-specific protein required for homologous recombination in meiosis I. The chain is Spermatogenesis-associated protein 22 (SPATA22) from Bos taurus (Bovine).